The chain runs to 356 residues: Vesicular integral-membrane protein VIP36 (356 aa).

The signal sequence occupies residues 1-44; that stretch reads MAAEGWIWRWGWGRRCLGRPGLPGPGPGPATPLFLLLLLGPVVA. Over 45-322 the chain is Lumenal; it reads DITDGNSEHL…FRSGPLTGWR (278 aa). Positions 52 to 276 constitute an L-type lectin-like domain; sequence EHLKREHSLI…DIISMKLFQL (225 aa). The a carbohydrate site is built by Ser96 and Asp131. Asp162, Tyr164, and Asn166 together coordinate Ca(2+). An a carbohydrate-binding site is contributed by 164–166; that stretch reads YPN. N-linked (GlcNAc...) asparagine glycosylation is present at Asn183. Residue His190 participates in a carbohydrate binding. Asp193 contacts Ca(2+). A disulfide bridge connects residues Cys202 and Cys239. Position 260–262 (260–262) interacts with a carbohydrate; the sequence is GDL. The helical transmembrane segment at 323–345 threads the bilayer; it reads VFLLLLCALLGIIVCAVVGAVVF. Residues 346 to 356 lie on the Cytoplasmic side of the membrane; that stretch reads QKRQERNKRFY.

Monomer. Ca(2+) is required as a cofactor. Expressed in kidney, liver, intestine, lung, spleen and heart. Low expression in brain.

The protein localises to the golgi apparatus membrane. Plays a role as an intracellular lectin in the early secretory pathway. Interacts with N-acetyl-D-galactosamine and high-mannose type glycans and may also bind to O-linked glycans. Involved in the transport and sorting of glycoproteins carrying high mannose-type glycans. This chain is Vesicular integral-membrane protein VIP36 (LMAN2), found in Canis lupus familiaris (Dog).